The following is a 353-amino-acid chain: MTSFVPQSLSPQFHSMGQESQEFSLYGDNFYSAQHVPSPQQTLPSAYDFGEYAGQTSNPYLWFNGPGLSPAPCLTTGPQHYGMAKQYVGASGIGGSEGAFSWFSLPSQEDLMKLVRPPYSYSALIAMAIHGAPNRRLTLSQIYQYVADNFPFYNKSKASWQNSIRHNLSLNDCFMKVPRDDSDPGKGNYWTLDPNCEKMFDNGNFRRKRKRKSDSLAEEEGKGYSGSDSALSSPKNPSDSSERGNSPISTDQAPCLNSFLNQMGDVASGSREALLPSPLAVPLSQRSSPTGVYGSYSPNATMPQWETQIPQSSISSTPYKDGYSDSMLNPYSSQLYPVLGSSDLLYPREGSEV.

Positions 116–210 (RPPYSYSALI…DNGNFRRKRK (95 aa)) form a DNA-binding region, fork-head. The interval 201–255 (DNGNFRRKRKRKSDSLAEEEGKGYSGSDSALSSPKNPSDSSERGNSPISTDQAPC) is disordered. The Nuclear localization signal motif lies at 206 to 212 (RRKRKRK). Over residues 213–222 (SDSLAEEEGK) the composition is skewed to basic and acidic residues. Residues 226–252 (GSDSALSSPKNPSDSSERGNSPISTDQ) show a composition bias toward polar residues.

In terms of tissue distribution, expressed in ionocyte precursors.

The protein resides in the nucleus. Functionally, transcription factor required for epithelial cell differentiation. Involved in specification of skin ionocytes from epidermal precursors. The protein is Forkhead box protein I3-A of Danio rerio (Zebrafish).